Here is a 195-residue protein sequence, read N- to C-terminus: Nucleoside-triphosphatase THEP1 (195 aa).

ATP-binding positions include 11-18 and 103-110; these read GRPGSGKS and VVVIDEIG.

Belongs to the THEP1 NTPase family.

The enzyme catalyses a ribonucleoside 5'-triphosphate + H2O = a ribonucleoside 5'-diphosphate + phosphate + H(+). Has nucleotide phosphatase activity towards ATP, GTP, CTP, TTP and UTP. May hydrolyze nucleoside diphosphates with lower efficiency. This Korarchaeum cryptofilum (strain OPF8) protein is Nucleoside-triphosphatase THEP1.